The following is a 72-amino-acid chain: UPF0346 protein GK1571 (72 aa).

This sequence belongs to the UPF0346 family.

The chain is UPF0346 protein GK1571 from Geobacillus kaustophilus (strain HTA426).